Consider the following 732-residue polypeptide: Protein DIA2 (732 aa).

3 TPR repeats span residues 15–48 (VLKAIELGTRLFKSGEYLQAKRIFTNALRVCDSY), 78–111 (IKILDNICACYEKLNDLKSCLDVSQRLLKLEPGN), and 113–145 (KCYIRCTRTLIKLKDWKRAYKTCSRGLQLCNND). An F-box domain is found at 204–251 (TDLVGNLPIEILPIIFQRFTTKELVTLSLVCNKWRDKILYHLDCFQEF). Residue serine 393 is modified to Phosphoserine. LRR repeat units follow at residues 425–449 (LEKITLICDKKKIKNFPLCRALLRG), 480–505 (FPDLKELWIEDNDNCELSKFLQLLKF), 509–532 (WKNLEKLTFRENKLYPIVNLDEDQ), 550–574 (LQNLEKLDLMGTSISGSALTRLCEQ), 579–602 (GRKLRSLNIGNCPNIQFPNNHAHT), 616–637 (LSKLEEINLSHLSSLNDSTMKS), and 645–669 (LENLKRLDISHNFEITGISIYEFLK).

Belongs to the DIA2 family. Component of the SCF(DIA2) complex containing CDC53, SKP1, RBX1 and DIA2. Interacts with SKP1.

The protein resides in the nucleus. In terms of biological role, F-box protein component of a SCF (SKP1-CUL1-F-box protein) E3 ubiquitin-protein ligase complex which mediates the ubiquitination and subsequent proteasomal degradation of target proteins. Probably recognizes and binds to phosphorylated target proteins. The SCF(DIA2) complex is specifically involved in the pheromone induced degradation of phosphorylated TEC1. The SCF(DIA2) complex binds to DNA replication origins. Involved in DNA replication, genome stability, and the control of cell cycle, probably through its association to replication origins to facilitate the ubiquitination of another origin-binding protein. Required for invasive growth and growth under alkaline conditions. This is Protein DIA2 (DIA2) from Saccharomyces cerevisiae (strain ATCC 204508 / S288c) (Baker's yeast).